Reading from the N-terminus, the 70-residue chain is DNA-binding transcriptional activator AlpA (70 aa).

A DNA-binding region (H-T-H motif) is located at residues 12–31 (LPAVIQKTGMARATIYDWLN).

Its function is as follows. Positive regulator of the expression of the slpA gene. When overexpressed, leads to suppression of the capsule overproduction and UV sensitivity phenotypes of cells mutant for the Lon ATP-dependent protease. Part of the cryptic P4-like prophage CP4-57. Overexpression of AlpA leads to excision of the CP4-57 prophage by IntA. This inactivates ssrA (the gene upstream of the prophage) that encodes tmRNA which is required to rescue stalled ribosomes in a process known as trans-translation. The polypeptide is DNA-binding transcriptional activator AlpA (Escherichia coli (strain K12)).